A 463-amino-acid chain; its full sequence is MDATPELKLYNTLTREKSVFSPIDPNNVRMYVCGPTVYDFAHIGNARPVIVFDVLFRLLRYVYGEDHVTYARNITDVDDKINARALRDHPGLPLNDAIRAVTEKTETQFHADVAELGCLEPNFEPRATDNIVEMTEIIEKLIGNGHAYVASGEVLFDTKSMADYGQLSKRPLDEQQAGARIAVDAHKKNPGDFVLWKLSSHNEPGWESPWGRGRPGWHIECSAMSKRYLGDVFDIHGGGLDLIFPHHENEIAQSRCAHGTEVMANVWMHNGFLQVEGRKMSKSEGNFVTIHELLQTETFGGRKWPGQVLRLAMLMTHYREPIDFSIKRLEEAERLLAKWPAAEASDAAPDESVLNALSDDLNTVAAVQALHALAQAAHGDPTARAVFAATADLLGLLPKKMEIDEAVASAVDALVAMRLEMLKAKNFTEADKIRDELTAKGIQLKDGKDAVTGERVTTWEVKR.

Cys33 serves as a coordination point for Zn(2+). The 'HIGH' region signature appears at 35 to 45; that stretch reads PTVYDFAHIGN. Positions 221, 246, and 250 each coordinate Zn(2+). The short motif at 279 to 283 is the 'KMSKS' region element; sequence KMSKS. Lys282 provides a ligand contact to ATP.

The protein belongs to the class-I aminoacyl-tRNA synthetase family. In terms of assembly, monomer. Requires Zn(2+) as cofactor.

It localises to the cytoplasm. The enzyme catalyses tRNA(Cys) + L-cysteine + ATP = L-cysteinyl-tRNA(Cys) + AMP + diphosphate. The protein is Cysteine--tRNA ligase of Rhizobium johnstonii (strain DSM 114642 / LMG 32736 / 3841) (Rhizobium leguminosarum bv. viciae).